Consider the following 119-residue polypeptide: Thrombin-like enzyme TLBan (119 aa).

One can recognise a Peptidase S1 domain in the interval 1–112 (VIGGDECNIN…YLLWIQSIIA (112 aa)). Catalysis depends on charge relay system residues His-40 and Asp-59. A disulfide bridge links Cys-54 with Cys-118.

In terms of assembly, monomer. In terms of processing, contains both N-linked carbohydrates and sialic acid. In terms of tissue distribution, expressed by the venom gland.

It localises to the secreted. Strongly inhibited by PMSF and slightly inhibited by EDTA and soybean trypsin inhibitor. Its function is as follows. Thrombin-like snake venom serine protease, with high clotting activity in vitro. Also has fibrinogenolytic ability, showing a fast degradation of fibrinogen Aalpha chain (FGA), a slow degradation of Bbeta chain (FGB) and no degradation of gamma chain. Also causes platelet aggregation in platelet rich plasma (PRP) and washed platelet suspension. This Bothrocophias andianus (Andean lancehead) protein is Thrombin-like enzyme TLBan.